We begin with the raw amino-acid sequence, 344 residues long: Trace amine-associated receptor 8a (344 aa).

Over 1 to 33 the chain is Extracellular; it reads MTSNFSQAPLQLCYENVNASCIKTPYSPGLRVL. 2 N-linked (GlcNAc...) asparagine glycosylation sites follow: asparagine 4 and asparagine 18. 2 cysteine pairs are disulfide-bonded: cysteine 21/cysteine 185 and cysteine 96/cysteine 189. A helical membrane pass occupies residues 34 to 54; it reads LYMVFGFGAVLAVCGNLLVVI. The Cytoplasmic segment spans residues 55 to 67; that stretch reads SVLHFKQLHSPAN. The helical transmembrane segment at 68 to 88 threads the bilayer; sequence FLIASLASADFLVGISVMPFS. Topologically, residues 89–102 are extracellular; sequence MVRSIESCWYFGDT. Residues 103 to 127 form a helical membrane-spanning segment; that stretch reads FCSLHSCCDAAFCYSSLFHLCFISV. At 128 to 146 the chain is on the cytoplasmic side; the sequence is DRYIAVTDPLVYPTKFTVS. The chain crosses the membrane as a helical span at residues 147–167; sequence VSGICISISWILPLVYSSAVF. Residues 168–196 are Extracellular-facing; sequence YTGISATGIENLVSALNCVGGCQIVVNQD. A helical transmembrane segment spans residues 197–217; sequence WVLIDFLLFLIPTLVMIILYS. At 218-260 the chain is on the cytoplasmic side; sequence KIFLVAKQQAVKIETSISGSKGESSLESHKARVAKRERKAAKT. A helical membrane pass occupies residues 261 to 281; the sequence is LGVTVVAFMVSWLPYTIDTLI. The Extracellular segment spans residues 282-291; the sequence is DAFMGFITPA. A helical transmembrane segment spans residues 292-314; it reads YVYEICCWSAYYNSAMNPLIYAF. Topologically, residues 315–344 are cytoplasmic; the sequence is FYPWFRKAIKLILSGEILKSHSSTMSLFSE.

Belongs to the G-protein coupled receptor 1 family.

It is found in the cell membrane. Its function is as follows. Olfactory receptor activated by trace amines. Trace amine compounds are enriched in animal body fluids and act on trace amine-associated receptors (TAARs) to elicit both intraspecific and interspecific innate behaviors. Ligand-binding causes a conformation change that triggers signaling via G(s)-class of G alpha proteins (GNAL or GNAS). The protein is Trace amine-associated receptor 8a of Rattus norvegicus (Rat).